Here is a 382-residue protein sequence, read N- to C-terminus: Dual-specificity RNA methyltransferase RlmN (382 aa).

Catalysis depends on Glu96, which acts as the Proton acceptor. One can recognise a Radical SAM core domain in the interval 102–342; it reads QGGRGTLCVS…VRTTRGEDID (241 aa). Cys109 and Cys345 form a disulfide bridge. Residues Cys116, Cys120, and Cys123 each contribute to the [4Fe-4S] cluster site. Residues 170-171, Ser202, 224-226, and Asn302 each bind S-adenosyl-L-methionine; these read GE and SLH. Residue Cys345 is the S-methylcysteine intermediate of the active site.

This sequence belongs to the radical SAM superfamily. RlmN family. The cofactor is [4Fe-4S] cluster.

Its subcellular location is the cytoplasm. The catalysed reaction is adenosine(2503) in 23S rRNA + 2 reduced [2Fe-2S]-[ferredoxin] + 2 S-adenosyl-L-methionine = 2-methyladenosine(2503) in 23S rRNA + 5'-deoxyadenosine + L-methionine + 2 oxidized [2Fe-2S]-[ferredoxin] + S-adenosyl-L-homocysteine. It carries out the reaction adenosine(37) in tRNA + 2 reduced [2Fe-2S]-[ferredoxin] + 2 S-adenosyl-L-methionine = 2-methyladenosine(37) in tRNA + 5'-deoxyadenosine + L-methionine + 2 oxidized [2Fe-2S]-[ferredoxin] + S-adenosyl-L-homocysteine. Functionally, specifically methylates position 2 of adenine 2503 in 23S rRNA and position 2 of adenine 37 in tRNAs. m2A2503 modification seems to play a crucial role in the proofreading step occurring at the peptidyl transferase center and thus would serve to optimize ribosomal fidelity. The polypeptide is Dual-specificity RNA methyltransferase RlmN (Stutzerimonas stutzeri (strain A1501) (Pseudomonas stutzeri)).